The following is a 390-amino-acid chain: Levoglucosan dehydrogenase (390 aa).

Residues Phe13, Met14, Glu43, Thr81, Asn83, His86, Glu103, Lys104, Ala130, and Asn132 each contribute to the NADH site. Levoglucosan is bound at residue Lys104. Residues Tyr133 and Gln163 each contribute to the levoglucosan site. Trp175 and Arg176 together coordinate NADH. Residues Arg176, Asp189, and His193 each contribute to the levoglucosan site. Tyr335 contacts NADH.

Belongs to the Gfo/Idh/MocA family. As to quaternary structure, homotetramer.

It catalyses the reaction levoglucosan + NAD(+) = 3-dehydrolevoglucosan + NADH + H(+). Functionally, catalyzes the oxidation of levoglucosan (1,6-anhydro-beta-D-glucose, LG) to 3-dehydrolevoglucosan (3-keto-LG). Exhibits high substrate specificity toward levoglucosan and NAD(+) for the oxidative reaction. Exhibits weak activities (about 4% compared with that of LG) toward L-sorbose and 1,5-anhydro-D-glucitol, and activity toward D-xylose is also detectable (1.7%). Can also efficiently catalyzes the NADH-dependent reduction (reverse reaction) of 3-keto-LG. The sequence is that of Levoglucosan dehydrogenase from Pseudarthrobacter phenanthrenivorans (strain DSM 18606 / JCM 16027 / LMG 23796 / Sphe3) (Arthrobacter phenanthrenivorans).